The sequence spans 182 residues: Nucleoside-triphosphatase THEP1 (182 aa).

ATP-binding positions include 10–17 and 102–109; these read GRPGIGKT and VVVIDEIG.

This sequence belongs to the THEP1 NTPase family.

It carries out the reaction a ribonucleoside 5'-triphosphate + H2O = a ribonucleoside 5'-diphosphate + phosphate + H(+). In terms of biological role, has nucleotide phosphatase activity towards ATP, GTP, CTP, TTP and UTP. May hydrolyze nucleoside diphosphates with lower efficiency. The sequence is that of Nucleoside-triphosphatase THEP1 from Thermofilum pendens (strain DSM 2475 / Hrk 5).